Consider the following 242-residue polypeptide: DNA repair protein RecO (242 aa).

Belongs to the RecO family. In terms of assembly, monomer.

Functionally, involved in DNA repair and RecF pathway recombination. This chain is DNA repair protein RecO, found in Shigella flexneri serotype 5b (strain 8401).